Here is a 205-residue protein sequence, read N- to C-terminus: MAAARPSLGRVLPGSSILFLCDMQEKFRHNIAYFPQIVSVAARMLRVARLLEVPVMLTEQYPQGLGPTVPELGAEGLRPLAKTCFSMVPALRQELDSRPQLRSVLLCGIEAQACILNTTLDLLDQGLQVHVVVDACSSRSQVDRLVALARMRQSGAFLSTSEGLILQLVGDAAHPQFKEIQKLIKEPAPDSGLLGLFQGQNSLLH.

Residues Ser7 and Ser202 each carry the phosphoserine modification.

The protein belongs to the isochorismatase family. As to quaternary structure, interacts with CDKN2A.

It localises to the cytoplasm. The protein localises to the nucleus. The sequence is that of Isochorismatase domain-containing protein 2 (ISOC2) from Pongo abelii (Sumatran orangutan).